The sequence spans 478 residues: Catalase (478 aa).

A disordered region spans residues 1–23 (MTNQLTTNEGQPWADNQHSQTAG). Residues His53 and Asn126 contribute to the active site. Tyr336 is a heme binding site.

This sequence belongs to the catalase family. Heme serves as cofactor.

Its subcellular location is the cytoplasm. It catalyses the reaction 2 H2O2 = O2 + 2 H2O. In terms of biological role, decomposes hydrogen peroxide into water and oxygen; serves to protect cells from the toxic effects of hydrogen peroxide. This Latilactobacillus sakei (Lactobacillus sakei) protein is Catalase (katA).